Reading from the N-terminus, the 78-residue chain is Acyl carrier protein (78 aa).

A Carrier domain is found at 2–77 (STIEERVKKI…AAIDFIQANQ (76 aa)). Serine 37 is modified (O-(pantetheine 4'-phosphoryl)serine).

This sequence belongs to the acyl carrier protein (ACP) family. In terms of processing, 4'-phosphopantetheine is transferred from CoA to a specific serine of apo-ACP by AcpS. This modification is essential for activity because fatty acids are bound in thioester linkage to the sulfhydryl of the prosthetic group.

Its subcellular location is the cytoplasm. It functions in the pathway lipid metabolism; fatty acid biosynthesis. Its function is as follows. Carrier of the growing fatty acid chain in fatty acid biosynthesis. The sequence is that of Acyl carrier protein from Pectobacterium atrosepticum (strain SCRI 1043 / ATCC BAA-672) (Erwinia carotovora subsp. atroseptica).